A 111-amino-acid polypeptide reads, in one-letter code: Putative membrane protein insertion efficiency factor (111 aa).

It belongs to the UPF0161 family.

The protein resides in the cell inner membrane. Functionally, could be involved in insertion of integral membrane proteins into the membrane. The polypeptide is Putative membrane protein insertion efficiency factor (Methylobacterium nodulans (strain LMG 21967 / CNCM I-2342 / ORS 2060)).